Consider the following 414-residue polypeptide: Cytochrome P450 CYP105Q4 (414 aa).

Residues 1–12 (MSDTLASPSPET) are compositionally biased toward polar residues. Residues 1–21 (MSDTLASPSPETASGIPDYPM) form a disordered region. Positions 108, 302, 304, 361, and 363 each coordinate heme.

Belongs to the cytochrome P450 family. It depends on heme as a cofactor.

In terms of biological role, can bind oleic-acid derivatives, amphotericin B like precursors and a variety of nitrogen ligand donors. This Mycobacterium marinum (strain ATCC BAA-535 / M) protein is Cytochrome P450 CYP105Q4.